The following is a 262-amino-acid chain: Cell division protein FtsQ (262 aa).

At 1–20 (MSWSDKRRHWRARKSQVNWY) the chain is on the cytoplasmic side. The helical transmembrane segment at 21 to 41 (LWSGIGFLSLVIGSFVFGGYL) threads the bilayer. The Periplasmic portion of the chain corresponds to 42–262 (LHKFLNDAST…EPIINDEKPR (221 aa)). The region spanning 52–121 (LPIEAVAIKG…AKLRVYLQEQ (70 aa)) is the POTRA domain.

The protein belongs to the FtsQ/DivIB family. FtsQ subfamily. In terms of assembly, part of a complex composed of FtsB, FtsL and FtsQ.

The protein localises to the cell inner membrane. Essential cell division protein. May link together the upstream cell division proteins, which are predominantly cytoplasmic, with the downstream cell division proteins, which are predominantly periplasmic. May control correct divisome assembly. The chain is Cell division protein FtsQ from Shewanella oneidensis (strain ATCC 700550 / JCM 31522 / CIP 106686 / LMG 19005 / NCIMB 14063 / MR-1).